The following is a 260-amino-acid chain: Cytochrome c oxidase subunit 2 (260 aa).

Residues 1-39 (MKFEWLFLTIAPCDAAEPWQLGFQDAATPMMQGIIDLHH) are Mitochondrial intermembrane-facing. Residues 40 to 61 (DIFFFLILILVFVSRILVRALW) form a helical membrane-spanning segment. At 62 to 76 (HFHYKKNPIPQRIVH) the chain is on the mitochondrial matrix side. A helical transmembrane segment spans residues 77–104 (GTTIEILRTIFPSIIPMFIAIPSFALLY). Topologically, residues 105–260 (SMDEVVVDPA…QLIPQTTGEA (156 aa)) are mitochondrial intermembrane. Cu cation contacts are provided by histidine 186, cysteine 221, glutamate 223, cysteine 225, and histidine 229. Glutamate 223 lines the Mg(2+) pocket.

It belongs to the cytochrome c oxidase subunit 2 family. Component of the cytochrome c oxidase (complex IV, CIV), a multisubunit enzyme composed of a catalytic core of 3 subunits and several supernumerary subunits. The complex exists as a monomer or a dimer and forms supercomplexes (SCs) in the inner mitochondrial membrane with ubiquinol-cytochrome c oxidoreductase (cytochrome b-c1 complex, complex III, CIII). Cu cation serves as cofactor.

The protein resides in the mitochondrion inner membrane. It carries out the reaction 4 Fe(II)-[cytochrome c] + O2 + 8 H(+)(in) = 4 Fe(III)-[cytochrome c] + 2 H2O + 4 H(+)(out). Functionally, component of the cytochrome c oxidase, the last enzyme in the mitochondrial electron transport chain which drives oxidative phosphorylation. The respiratory chain contains 3 multisubunit complexes succinate dehydrogenase (complex II, CII), ubiquinol-cytochrome c oxidoreductase (cytochrome b-c1 complex, complex III, CIII) and cytochrome c oxidase (complex IV, CIV), that cooperate to transfer electrons derived from NADH and succinate to molecular oxygen, creating an electrochemical gradient over the inner membrane that drives transmembrane transport and the ATP synthase. Cytochrome c oxidase is the component of the respiratory chain that catalyzes the reduction of oxygen to water. Electrons originating from reduced cytochrome c in the intermembrane space (IMS) are transferred via the dinuclear copper A center (CU(A)) of subunit 2 and heme A of subunit 1 to the active site in subunit 1, a binuclear center (BNC) formed by heme A3 and copper B (CU(B)). The BNC reduces molecular oxygen to 2 water molecules using 4 electrons from cytochrome c in the IMS and 4 protons from the mitochondrial matrix. The chain is Cytochrome c oxidase subunit 2 (COX2) from Glycine max (Soybean).